We begin with the raw amino-acid sequence, 235 residues long: Ribitol-5-phosphate cytidylyltransferase (235 aa).

CTP-binding positions include 7–10, 82–88, and S113; these read LAGG and GADRNTS.

This sequence belongs to the IspD/TarI cytidylyltransferase family. TarI subfamily.

It catalyses the reaction D-ribitol 5-phosphate + CTP + H(+) = CDP-L-ribitol + diphosphate. It participates in cell wall biogenesis; poly(ribitol phosphate) teichoic acid biosynthesis. Its function is as follows. Catalyzes the transfer of the cytidylyl group of CTP to D-ribitol 5-phosphate. The sequence is that of Ribitol-5-phosphate cytidylyltransferase from Streptococcus pneumoniae (strain CGSP14).